Reading from the N-terminus, the 82-residue chain is Large ribosomal subunit protein bL27 (82 aa).

The interval 1–21 is disordered; the sequence is MAHKKGASSSRNGRDSNAKRL.

The protein belongs to the bacterial ribosomal protein bL27 family.

The chain is Large ribosomal subunit protein bL27 from Tropheryma whipplei (strain TW08/27) (Whipple's bacillus).